Here is a 548-residue protein sequence, read N- to C-terminus: Transcriptional adapter ADA2a (548 aa).

The segment at 1 to 30 (MGRSKLASRPAEEDLNPGKSKRKKISLGPE) is disordered. A ZZ-type zinc finger spans residues 48-104 (PGLYCCNYCDKDLSGLVRFKCAVCMDFDLCVECFSVGVELNRHKNSHPYRVMDNLSF). Residues Cys-53, Cys-56, Cys-68, Cys-71, Cys-77, Cys-80, His-90, and His-94 each coordinate Zn(2+). The region spanning 106–158 (LVTSDWNADEEILLLEAIATYGFGNWKEVADHVGSKTTTECIKHFNSAYMQSP) is the SANT domain. Lys-257 carries the post-translational modification N6-acetyllysine; by GCN5. A coiled-coil region spans residues 365-386 (QSKEEHKELIKKVIEEHQILRR). An SWIRM domain is found at 461–548 (PRIYSGLDTW…LVHKGIGDST (88 aa)).

As to quaternary structure, interacts in vitro with the HAT domain of GCN5 and with the DNA-binding domain of the transcriptional activator DREB1B/CBF1. Acetylated in vitro by GCN5, but acetylation is not essential for biological activity. Expressed in roots and leaves.

It localises to the nucleus. Functionally, required for the function of some acidic activation domains, which activate transcription from a distant site. The exact mechanism of action is not yet known. ADA2 stimulates the acetyltransferase activity of GCN5 on free histones or nucleosomes, probably by opening up the promoter region. This chain is Transcriptional adapter ADA2a (ADA2A), found in Arabidopsis thaliana (Mouse-ear cress).